The primary structure comprises 548 residues: MNPSTTQARVVVDELIRGGVRDVVLCPGSRNAPLAFALQDADRSGRIRLHVRIDERTAGFLAIGLAVGAGAPACVAMTSGTAVANLGPAVVEANYARVPLIVLSANRPYELLGTGANQTMEQLGYFGTQVRATISLGLAEDAHERLDSLNASWRSATCRVLAAAMGSRTANAGPVHFDIPLREPLVPDPEPHGAVTPPGRPEGRPWTYTPPVTFDQPLEIDLSADTVVIAGHGAGVHPNLVQLPTIAEPTAPAAPSGGNPLHPLALPLLRPRQVIMLGRPTLHRPVSALLADPEVPVFALTTGPRWPDVSGNSQATGTRAIVTGTPNPSWLDRCAQMNRHAVAAVREQLAAHPLTTGLHVAAAVAGALRPGDQLVLGASNPVRDAALVGLDTAGLRVRSNRGVAGIDGTVSTAIGAALGYERDHHGRTVALIGDLTFVHDSSGLLIGPTEPTPRQLTIVVSNDNGGGIFELLEQGDPRFSDVSSRIFGTPHDVDVGALCRAYHVENRQIEVDQLPAALDEPGSGLRVLEVKADRSSLRQLHAAIKAAL.

The protein belongs to the TPP enzyme family. MenD subfamily. In terms of assembly, homodimer. Mg(2+) is required as a cofactor. Mn(2+) serves as cofactor. The cofactor is thiamine diphosphate.

The enzyme catalyses isochorismate + 2-oxoglutarate + H(+) = 5-enolpyruvoyl-6-hydroxy-2-succinyl-cyclohex-3-ene-1-carboxylate + CO2. It participates in quinol/quinone metabolism; 1,4-dihydroxy-2-naphthoate biosynthesis; 1,4-dihydroxy-2-naphthoate from chorismate: step 2/7. It functions in the pathway quinol/quinone metabolism; menaquinone biosynthesis. Its function is as follows. Catalyzes the thiamine diphosphate-dependent decarboxylation of 2-oxoglutarate and the subsequent addition of the resulting succinic semialdehyde-thiamine pyrophosphate anion to isochorismate to yield 2-succinyl-5-enolpyruvyl-6-hydroxy-3-cyclohexene-1-carboxylate (SEPHCHC). This is 2-succinyl-5-enolpyruvyl-6-hydroxy-3-cyclohexene-1-carboxylate synthase from Mycobacterium marinum (strain ATCC BAA-535 / M).